The sequence spans 978 residues: Glycine dehydrogenase (decarboxylating) (978 aa).

Lys726 carries the N6-(pyridoxal phosphate)lysine modification.

The protein belongs to the GcvP family. The glycine cleavage system is composed of four proteins: P, T, L and H. Pyridoxal 5'-phosphate is required as a cofactor.

The enzyme catalyses N(6)-[(R)-lipoyl]-L-lysyl-[glycine-cleavage complex H protein] + glycine + H(+) = N(6)-[(R)-S(8)-aminomethyldihydrolipoyl]-L-lysyl-[glycine-cleavage complex H protein] + CO2. In terms of biological role, the glycine cleavage system catalyzes the degradation of glycine. The P protein binds the alpha-amino group of glycine through its pyridoxal phosphate cofactor; CO(2) is released and the remaining methylamine moiety is then transferred to the lipoamide cofactor of the H protein. The chain is Glycine dehydrogenase (decarboxylating) from Paraburkholderia xenovorans (strain LB400).